Reading from the N-terminus, the 388-residue chain is 2-epi-5-epi-valiolone synthase (388 aa).

Residues 92–95 (ERNK), 124–128 (GIVAD), 148–149 (TT), K161, K170, and 188–191 (LLAT) each bind NAD(+). Residues E203, H267, and H283 each coordinate Zn(2+).

The protein belongs to the sugar phosphate cyclases superfamily. EEVS-like family. It depends on NAD(+) as a cofactor. The cofactor is Co(2+). Zn(2+) is required as a cofactor.

It carries out the reaction D-sedoheptulose 7-phosphate = 2-epi-5-epi-valiolone + phosphate. Its function is as follows. Catalyzes the cyclization of D-sedoheptulose 7-phosphate to 2-epi-5-epi-valiolone. Probably involved in acarbose biosynthesis. In Streptomyces glaucescens, this protein is 2-epi-5-epi-valiolone synthase.